Reading from the N-terminus, the 312-residue chain is Olfactory receptor 51I2 (312 aa).

Residues M1–S25 lie on the Extracellular side of the membrane. N-linked (GlcNAc...) asparagine glycosylation is present at N5. A helical transmembrane segment spans residues W26–L46. Over Q47 to S54 the chain is Cytoplasmic. The helical transmembrane segment at L55–M75 threads the bilayer. Residues A76 to I99 are Extracellular-facing. C97 and C189 are joined by a disulfide. The chain crosses the membrane as a helical span at residues Q100–F120. Residues D121–E139 lie on the Cytoplasmic side of the membrane. A helical transmembrane segment spans residues V140–P160. Residues F161–S196 are Extracellular-facing. Residues I197–S217 traverse the membrane as a helical segment. Residues Y218 to A237 lie on the Cytoplasmic side of the membrane. A helical membrane pass occupies residues L238 to V258. The Extracellular portion of the chain corresponds to S259–H273. The helical transmembrane segment at V274–A294 threads the bilayer. Topologically, residues K295–I312 are cytoplasmic.

Belongs to the G-protein coupled receptor 1 family.

It is found in the cell membrane. In terms of biological role, odorant receptor. The protein is Olfactory receptor 51I2 (OR51I2) of Homo sapiens (Human).